The primary structure comprises 91 residues: Small ribosomal subunit protein bS16 (91 aa).

Belongs to the bacterial ribosomal protein bS16 family.

The sequence is that of Small ribosomal subunit protein bS16 from Staphylococcus aureus (strain Mu3 / ATCC 700698).